Consider the following 928-residue polypeptide: Protein NETWORKED 2B (928 aa).

In terms of domain architecture, NAB spans 10–90 (YSWWWASHIR…ERYDHLSTEL (81 aa)). The tract at residues 108–144 (PLVDDDDDDDDDNPKKPPKHLHLIPSGTNIPQVPEVP) is disordered. Over residues 110-119 (VDDDDDDDDD) the composition is skewed to acidic residues. Coiled-coil stretches lie at residues 207–309 (SYEQ…AKKA) and 360–445 (ALLK…VKMD). 2 disordered regions span residues 447 to 472 (DVEG…SISN) and 489 to 529 (KQSR…EERR). Positions 457 to 468 (DIQEEDTVEDSD) are enriched in acidic residues. The segment covering 489-506 (KQSRDQESMQEEKSETRD) has biased composition (basic and acidic residues). A coiled-coil region spans residues 547–574 (LLDEYSSVLRDYREVKRKLSEVEKKNRD). A disordered region spans residues 620 to 651 (AESVSISHSSNSSFSMPPLPQRGDLKRASEQE). Over residues 622–634 (SVSISHSSNSSFS) the composition is skewed to low complexity. Residues 642-651 (GDLKRASEQE) are compositionally biased toward basic and acidic residues.

The protein belongs to the NET family.

Its function is as follows. Plant-specific actin binding protein. May be part of a membrane-cytoskeletal adapter complex. This chain is Protein NETWORKED 2B, found in Arabidopsis thaliana (Mouse-ear cress).